The following is a 1074-amino-acid chain: Chitin synthase 2 (1074 aa).

3 disordered regions span residues 1-32 (MSHY…AHSG), 56-179 (QAAP…PSQH), and 209-255 (RSDS…PYNN). Residues 19–29 (DQQQPYYTDQA) show a composition bias toward polar residues. Residues 68-80 (RIRSNSSGSRSVS) show a composition bias toward low complexity. N-linked (GlcNAc...) asparagine glycans are attached at residues Asn72 and Asn97. The segment covering 85-119 (AYTNQGIPPVPSNLSAARQRSDPSQALPPSSSSYA) has biased composition (polar residues). Over residues 129 to 143 (SSHRNAPNAPNSNHP) the composition is skewed to low complexity. Asn149 carries N-linked (GlcNAc...) asparagine glycosylation. An N-linked (GlcNAc...) asparagine glycan is attached at Asn289. The next 8 membrane-spanning stretches (helical) occupy residues 608-628 (VFGF…KALL), 742-762 (LVLL…FYFL), 779-799 (GAAI…VVLV), 817-837 (IIIF…TIYL), 867-887 (IVIS…LHLE), 891-911 (MLTS…ILSM), 1001-1021 (LVLI…STWW), and 1048-1068 (IFWS…TFLL).

The protein belongs to the chitin synthase family. Class II subfamily.

It is found in the cell membrane. Its subcellular location is the cytoplasmic vesicle membrane. It carries out the reaction [(1-&gt;4)-N-acetyl-beta-D-glucosaminyl](n) + UDP-N-acetyl-alpha-D-glucosamine = [(1-&gt;4)-N-acetyl-beta-D-glucosaminyl](n+1) + UDP + H(+). Functionally, polymerizes chitin, a structural polymer of the cell wall and septum, by transferring the sugar moiety of UDP-GlcNAc to the non-reducing end of the growing chitin polymer. The chain is Chitin synthase 2 (CHS2) from Mycosarcoma maydis (Corn smut fungus).